The chain runs to 144 residues: Universal stress protein A (144 aa).

This sequence belongs to the universal stress protein A family. In terms of assembly, homodimer.

It is found in the cytoplasm. Its function is as follows. Required for resistance to DNA-damaging agents. The sequence is that of Universal stress protein A (uspA) from Escherichia coli O6:H1 (strain CFT073 / ATCC 700928 / UPEC).